Reading from the N-terminus, the 68-residue chain is Disintegrin EMF10B (68 aa).

The 68-residue stretch at 1 to 68 (ELLQNSGNPC…SDCPRNPVFK (68 aa)) folds into the Disintegrin domain. Cystine bridges form between Cys10–Cys33, Cys24–Cys30, Cys29–Cys54, and Cys42–Cys61. The Cell attachment site; atypical (MGD) motif lies at 46 to 48 (MGD).

This sequence belongs to the venom metalloproteinase (M12B) family. P-II subfamily. P-IIe sub-subfamily. In terms of assembly, heterodimer with EMF10A; disulfide-linked. As to expression, expressed by the venom gland.

It is found in the secreted. In terms of biological role, extremely potent and selective inhibitor of integrin alpha-5/beta-1 (ITGA5/ITGB1). Partially inhibits adhesion of cells expressing alpha-IIb/beta-3 (ITGA2B/ITGB3), alpha-V/beta-3 (ITGAV/ITGB3), and alpha-4/beta-1 (ITGA4/ITGB1) to appropriate ligands only at concentration higher than 500 nM. Weakly inhibits ADP-induced platelet aggregation. The chain is Disintegrin EMF10B from Eristicophis macmahoni (Leaf-nosed viper).